The sequence spans 241 residues: uncharacterized protein (241 aa).

Residues 32–86 (LKKWRNLFNIQQIELAKYLNVSPSVISDYEVGRRKNPGVNIIKKYVLALIEIDKE) form the HTH cro/C1-type domain. The segment at residues 43 to 62 (QIELAKYLNVSPSVISDYEV) is a DNA-binding region (H-T-H motif).

This is an uncharacterized protein from Methanocaldococcus jannaschii (strain ATCC 43067 / DSM 2661 / JAL-1 / JCM 10045 / NBRC 100440) (Methanococcus jannaschii).